The primary structure comprises 352 residues: N-acetyl-gamma-glutamyl-phosphate reductase (352 aa).

The active site involves Cys156.

Belongs to the NAGSA dehydrogenase family. Type 1 subfamily.

It is found in the cytoplasm. The enzyme catalyses N-acetyl-L-glutamate 5-semialdehyde + phosphate + NADP(+) = N-acetyl-L-glutamyl 5-phosphate + NADPH + H(+). It functions in the pathway amino-acid biosynthesis; L-arginine biosynthesis; N(2)-acetyl-L-ornithine from L-glutamate: step 3/4. Functionally, catalyzes the NADPH-dependent reduction of N-acetyl-5-glutamyl phosphate to yield N-acetyl-L-glutamate 5-semialdehyde. The protein is N-acetyl-gamma-glutamyl-phosphate reductase of Rhodospirillum rubrum (strain ATCC 11170 / ATH 1.1.1 / DSM 467 / LMG 4362 / NCIMB 8255 / S1).